A 410-amino-acid chain; its full sequence is TNF receptor-associated factor family protein DDB_G0279745 (410 aa).

Residues 27–67 (CVICSFPLFDGLQCKRGHGACKSCWEKIIGENGKKECHSCR) form an RING-type; degenerate zinc finger. 2 TRAF-type zinc fingers span residues 81-154 (YLEK…SLEQ) and 154-213 (QHQN…DESI). Residues 216-284 (LSNSIVEIQK…SMINKLDDSA (69 aa)) adopt a coiled-coil conformation.

It belongs to the TNF receptor-associated factor family.

It is found in the cytoplasm. Functionally, probable adapter protein and signal transducer that links members of the tumor necrosis factor receptor family to different signaling pathways by association with the receptor cytoplasmic domain and kinases. The chain is TNF receptor-associated factor family protein DDB_G0279745 from Dictyostelium discoideum (Social amoeba).